Reading from the N-terminus, the 96-residue chain is MSSISLNVLDDSVLIKPISEEKQGGIVLPSSAEKKPTKGEVIAIGEGSRNSSGERVTLTVKAGDKVFYRQWAGTEIEHNNEKLIVMKESDILAVIK.

The protein belongs to the GroES chaperonin family. Heptamer of 7 subunits arranged in a ring. Interacts with the chaperonin GroEL.

It localises to the cytoplasm. Its function is as follows. Together with the chaperonin GroEL, plays an essential role in assisting protein folding. The GroEL-GroES system forms a nano-cage that allows encapsulation of the non-native substrate proteins and provides a physical environment optimized to promote and accelerate protein folding. GroES binds to the apical surface of the GroEL ring, thereby capping the opening of the GroEL channel. The polypeptide is Co-chaperonin GroES (Wolbachia pipientis wMel).